A 406-amino-acid chain; its full sequence is MAKGEFIRTKPHVNVGTIGHVDHGKTTLTAALTYVAAAENPNVEVKDYGEIDKAPEERARGITINTAHVEYETAKRHYSHVDCPGHADYIKNMITGAAQMDGAILVVSAADGPMPQTREHILLARQVGVPYIVVFMNKVDMVDDPELLDLVEMEVRDLLNQYEFPGDEVPVIRGSALLALEQMHRNPKTRRGENEWVDKIWELLDAIDEYIPTPVRDVDKPFLMPVEDVFTITGRGTVATGRIERGKVKVGDEVEIVGLAPETRKTVVTGVEMHRKTLQEGIAGDNVGVLLRGVSREEVERGQVLAKPGSITPHTKFEASVYVLKKEEGGRHTGFFSGYRPQFYFRTTDVTGVVQLPPGVEMVMPGDNVTFTVELIKPVALEEGLRFAIREGGRTVGAGVVTKILE.

The tr-type G domain occupies 10–215; the sequence is KPHVNVGTIG…AIDEYIPTPV (206 aa). The G1 stretch occupies residues 19 to 26; that stretch reads GHVDHGKT. A GTP-binding site is contributed by 19–26; sequence GHVDHGKT. Position 26 (threonine 26) interacts with Mg(2+). The G2 stretch occupies residues 61-65; it reads GITIN. A G3 region spans residues 82 to 85; the sequence is DCPG. GTP is bound by residues 82-86 and 137-140; these read DCPGH and NKVD. Positions 137–140 are G4; it reads NKVD. Positions 175 to 177 are G5; the sequence is SAL.

This sequence belongs to the TRAFAC class translation factor GTPase superfamily. Classic translation factor GTPase family. EF-Tu/EF-1A subfamily. As to quaternary structure, monomer.

It localises to the cytoplasm. The catalysed reaction is GTP + H2O = GDP + phosphate + H(+). Its function is as follows. GTP hydrolase that promotes the GTP-dependent binding of aminoacyl-tRNA to the A-site of ribosomes during protein biosynthesis. This chain is Elongation factor Tu, found in Thermus thermophilus (strain ATCC BAA-163 / DSM 7039 / HB27).